A 92-amino-acid polypeptide reads, in one-letter code: Pyrimidine/purine nucleoside phosphorylase (92 aa).

It belongs to the nucleoside phosphorylase PpnP family.

The enzyme catalyses a purine D-ribonucleoside + phosphate = a purine nucleobase + alpha-D-ribose 1-phosphate. It carries out the reaction adenosine + phosphate = alpha-D-ribose 1-phosphate + adenine. It catalyses the reaction cytidine + phosphate = cytosine + alpha-D-ribose 1-phosphate. The catalysed reaction is guanosine + phosphate = alpha-D-ribose 1-phosphate + guanine. The enzyme catalyses inosine + phosphate = alpha-D-ribose 1-phosphate + hypoxanthine. It carries out the reaction thymidine + phosphate = 2-deoxy-alpha-D-ribose 1-phosphate + thymine. It catalyses the reaction uridine + phosphate = alpha-D-ribose 1-phosphate + uracil. The catalysed reaction is xanthosine + phosphate = alpha-D-ribose 1-phosphate + xanthine. Functionally, catalyzes the phosphorolysis of diverse nucleosides, yielding D-ribose 1-phosphate and the respective free bases. Can use uridine, adenosine, guanosine, cytidine, thymidine, inosine and xanthosine as substrates. Also catalyzes the reverse reactions. The sequence is that of Pyrimidine/purine nucleoside phosphorylase from Rhodopirellula baltica (strain DSM 10527 / NCIMB 13988 / SH1).